The following is an 810-amino-acid chain: MTTKTLPTLSMQQKNLLLEATRTIAPHWPLDKLIAVNPLWSLVDKPFDDISDELSALAGIKTYMSNETYRAWFDEGKISHHCLTKAAEHYGLNEQDALLEHLSQANNLPDSWRNIADLADQQRPANKMSWHDEITHQVSQFCAAHYQQQSPTLRQQNIDNELDLYSHWLEVTNEDKGLSIVMGEAKLTKFFHNLPTDKDALFALVIEELALDDQSLSFFAKALLLDINGWSSYLAYLNWSKGENNDNLAKDDHVESLLAIKMAWELVVWRYLKHTAPALLSTINTKWMAQKQAIPNLIQAHKDALITSKVWALALEYSEQKSLNQTLTTEPAHNTTQTRPELQAIFCIDVRSEVFRRALEQQSATIQTLGFAGFFGLPIEYKAKDSHYVRPQLPGLLQAAITVTESDSDKGHVHHQQKEARWYRWGHAAPAAFSMVESMGWWYAFKMFKQTLFSKRQEHPANRLAPNTHWQLTQQGVLLTDQDKAHLAKGILDTIKLTTYAPIVMLVGHGSHTSNNLHAAGLECGACGGQSGEVNVRVLASLLNDHKVRTLLNDMGMEIPSDTQFVPALHNTTTDQLTCFDQTKDAKPIDRKIKDWFEKAQFLAQQERAAKLDTALLDASDKQRSKAFSKRANDWSQVNPEWGLANNHSFIIAPRQKTRHLDLEGRSFLHDYDPQNDPDFAILERILTAPMLVTHWINMQYNLSVTDNFKFGCGNKVLHNAVGGNIGVFEGNGGDLRIGLSMQSLNDGQKWMHTPVRLAVYVTAPKSAIEKIAAKHDIVKHLIDNDWLYLFQWEDNKVARFYQQEWHAEK.

Zn(2+)-binding residues include cysteine 347, aspartate 349, histidine 509, and cysteine 524.

The protein belongs to the inorganic carbon transporter (TC 9.A.2) DabA family. In terms of assembly, forms a complex with DabB. Requires Zn(2+) as cofactor.

Its subcellular location is the cell inner membrane. In terms of biological role, part of an energy-coupled inorganic carbon pump. The sequence is that of Probable inorganic carbon transporter subunit DabA from Marinomonas sp. (strain MWYL1).